Consider the following 256-residue polypeptide: Necrosis-inducing protein NPP1 (256 aa).

The Conserved undecapeptide motif motif lies at 111 to 121 (AIMYAWYFPKG). The Conserved heptapeptide motif signature appears at 133-139 (GHRHEWE).

This sequence belongs to the Necrosis inducing protein (NPP1) family.

The protein resides in the secreted. In terms of biological role, secreted effector that acts as a pathogen-associated molecular pattern (PAMP) recognized by the plant immune system. This chain is Necrosis-inducing protein NPP1, found in Phytophthora cinnamomi (Cinnamon fungus).